The sequence spans 634 residues: UPF0329 protein ECU07_1850/ECU10_0050 (634 aa).

Basic and acidic residues-rich tracts occupy residues 354 to 365 (REEREKREESKG) and 397 to 407 (GESKEEDRGEE). Residues 354–438 (REEREKREES…KGSGEKRISE (85 aa)) are disordered. Positions 408 to 417 (GGVEAEDPLE) are enriched in acidic residues.

This sequence belongs to the UPF0329 family.

The chain is UPF0329 protein ECU07_1850/ECU10_0050 from Encephalitozoon cuniculi (strain GB-M1) (Microsporidian parasite).